Consider the following 930-residue polypeptide: Translation initiation factor IF-2 (930 aa).

The tract at residues 27–342 is disordered; it reads LGLDVKSHSS…APKPVTERKF (316 aa). Residues 52–103 show a composition bias toward low complexity; sequence KAAAPQAPAEKPVAAQPSPQKTPAKEAAPVKAEPTEAKAAAQPEAKTETAAP. 2 stretches are compositionally biased toward basic and acidic residues: residues 112–128 and 136–178; these read FKAE…ERRK and QNKE…DGRR. Polar residues predominate over residues 183–195; the sequence is HQGFNGQKRQQPQ. Basic and acidic residues predominate over residues 218–245; that stretch reads RSSEERFKQAQEAKEVMERQNRRKEQPK. Positions 251-268 are enriched in pro residues; it reads PVQPAPAPSAPAANPSPA. Residues 280–297 are compositionally biased toward basic and acidic residues; the sequence is ARPDKKRDDFDREEEGPR. The span at 302-318 shows a compositional bias: low complexity; the sequence is NRSSQNQVRNQRNSNWN. Positions 432-599 constitute a tr-type G domain; the sequence is ERPPVVTIMG…TVLLVAEIQE (168 aa). A G1 region spans residues 441–448; the sequence is GHVDHGKT. 441-448 contributes to the GTP binding site; sequence GHVDHGKT. A G2 region spans residues 466-470; it reads GITQH. A G3 region spans residues 487–490; the sequence is DTPG. Residues 487 to 491 and 541 to 544 contribute to the GTP site; these read DTPGH and NKID. The segment at 541–544 is G4; that stretch reads NKID. A G5 region spans residues 577 to 579; the sequence is SAK.

The protein belongs to the TRAFAC class translation factor GTPase superfamily. Classic translation factor GTPase family. IF-2 subfamily.

It is found in the cytoplasm. Its function is as follows. One of the essential components for the initiation of protein synthesis. Protects formylmethionyl-tRNA from spontaneous hydrolysis and promotes its binding to the 30S ribosomal subunits. Also involved in the hydrolysis of GTP during the formation of the 70S ribosomal complex. The chain is Translation initiation factor IF-2 from Streptococcus sanguinis (strain SK36).